Reading from the N-terminus, the 208-residue chain is Probable Brix domain-containing ribosomal biogenesis protein (208 aa).

One can recognise a Brix domain in the interval 1-196 (MMLITTSHRP…IWIMEDGRRW (196 aa)).

Its function is as follows. Probably involved in the biogenesis of the ribosome. The sequence is that of Probable Brix domain-containing ribosomal biogenesis protein from Thermococcus kodakarensis (strain ATCC BAA-918 / JCM 12380 / KOD1) (Pyrococcus kodakaraensis (strain KOD1)).